Here is a 157-residue protein sequence, read N- to C-terminus: Glutaredoxin-2, mitochondrial (157 aa).

A mitochondrion-targeting transit peptide spans M1–I19. A Glutaredoxin domain is found at V50–K150. Residue C61 coordinates [2Fe-2S] cluster. K67 contacts glutathione. C70 bears the S-glutathionyl cysteine; alternate mark. Residues C70 and C73 are joined by a disulfide bond. Residues Q102 and V114 each contribute to the glutathione site. C146 contributes to the [2Fe-2S] cluster binding site.

It belongs to the glutaredoxin family. In terms of assembly, monomer; active form. Homodimer; inactive form. The homodimer is probably linked by 1 2Fe-2S cluster.

The protein resides in the mitochondrion. It localises to the nucleus. With respect to regulation, the 2Fe-2S present in the homodimer leads to inactivation of the enzyme. The 2Fe-2S may serve as a redox sensor: the presence of one-electron oxidants or reductants leading to the loss of the 2Fe-2S cluster, subsequent monomerization and activation of the enzyme. In terms of biological role, glutathione-dependent oxidoreductase that facilitates the maintenance of mitochondrial redox homeostasis upon induction of apoptosis by oxidative stress. Involved in response to hydrogen peroxide and regulation of apoptosis caused by oxidative stress. Acts as a very efficient catalyst of monothiol reactions because of its high affinity for protein glutathione-mixed disulfides. Can receive electrons not only from glutathione (GSH), but also from thioredoxin reductase supporting both monothiol and dithiol reactions. Efficiently catalyzes both glutathionylation and deglutathionylation of mitochondrial complex I, which in turn regulates the superoxide production by the complex. Overexpression decreases the susceptibility to apoptosis and prevents loss of cardiolipin and cytochrome c release. The polypeptide is Glutaredoxin-2, mitochondrial (Glrx2) (Rattus norvegicus (Rat)).